The sequence spans 428 residues: BTB/POZ domain-containing protein KCTD16 (428 aa).

The BTB domain maps to 25-98; that stretch reads EVVELNVGGQ…LRDRQVVLPD (74 aa). Y112 carries the phosphotyrosine modification. Phosphoserine occurs at positions 130, 137, 143, and 146.

Homopentamer; forms an open pentamer. In contrast to other BTB domain-containing proteins, does not interact with CUL3. Interacts as a tetramer with GABRB1 and GABRB2.

It localises to the presynaptic cell membrane. The protein resides in the postsynaptic cell membrane. In terms of biological role, auxiliary subunit of GABA-B receptors that determine the pharmacology and kinetics of the receptor response. Increases agonist potency and markedly alter the G-protein signaling of the receptors by accelerating onset and promoting desensitization. The sequence is that of BTB/POZ domain-containing protein KCTD16 (KCTD16) from Homo sapiens (Human).